Here is a 205-residue protein sequence, read N- to C-terminus: Ras-related and estrogen-regulated growth inhibitor-like protein (205 aa).

Residues 1-205 (MSNFLHLKYN…NVFGKRRKSV (205 aa)) form a small GTPase-like region. Residues 11–18 (EKSVSVTK), 58–64 (DPCSQTQ), and 123–126 (NKRD) each bind GTP.

It belongs to the small GTPase superfamily. Ras family.

It catalyses the reaction GTP + H2O = GDP + phosphate + H(+). In terms of biological role, binds GDP/GTP and may possess intrinsic GTPase activity. This chain is Ras-related and estrogen-regulated growth inhibitor-like protein (RERGL), found in Homo sapiens (Human).